Consider the following 142-residue polypeptide: Ribosomal RNA large subunit methyltransferase H (142 aa).

Positions 55 and 87 each coordinate S-adenosyl-L-methionine.

This sequence belongs to the RNA methyltransferase RlmH family. Homodimer.

The protein localises to the cytoplasm. It carries out the reaction pseudouridine(1915) in 23S rRNA + S-adenosyl-L-methionine = N(3)-methylpseudouridine(1915) in 23S rRNA + S-adenosyl-L-homocysteine + H(+). In terms of biological role, specifically methylates the pseudouridine at position 1915 (m3Psi1915) in 23S rRNA. This chain is Ribosomal RNA large subunit methyltransferase H, found in Sphingopyxis alaskensis (strain DSM 13593 / LMG 18877 / RB2256) (Sphingomonas alaskensis).